We begin with the raw amino-acid sequence, 648 residues long: MTALLELCNVSRSYPSGEEQVAVLKDISLQIHAGEMVAIVGVSGSGKSTLMNILGCLDKPTSGTYRVAGRDVSTLDPDALAQLRREHFGFIFQRYHLLSHLTAAQNVEIPAVYAGIERKKRQTRARELLLRLGLSDRVDYPPSQLSGGQQQRVSIARALMNGGQVILADEPTGALDSHSGEEVMAILRQLRDRGHTVIIVTHDPLIAAQAERIIEIHDGKIVHNPPAQEKKREQGVDAAVVNTAPGWRQFASSFREALSMAWLAMAANKMRTLLTMLGIIIGIASVVSIVVVGDAAKQMVLADIRAMGTNTIDIHPGKDFGDDNPQYRQALKYDDLVAIQKQPWVNSATPSVSKSLRLRYGNIDIAVNANGVSGDYFNVYGMSFREGNTFNAVQQQDRAQVVVLDANTRRQLFPNKANVVGEVVLAGNMPVIVIGVAEEKPSMYGNSNLLQVWLPYSTMSDRIMGQSWLNSITVRVKDGVDSDQAEQQLTRLLTLRHGKKDFFTWNMDSVLKTAEKTTYTLQLFLTLVAVISLVVGGIGVMNIMLVSVTERTREIGIRMAVGARASDVLQQFLIEAVLVCLVGGALGISLSMFIAFMLQLFLPGWEIGFSLTALASAFLCSTFTGILFGWLPARNAARLDPVDALARE.

The ABC transporter domain occupies 5 to 243; that stretch reads LELCNVSRSY…QGVDAAVVNT (239 aa). 41–48 lines the ATP pocket; that stretch reads GVSGSGKS. The next 5 membrane-spanning stretches (helical) occupy residues 273–293, 417–437, 523–543, 577–597, and 611–631; these read LLTM…VVVG, ANVV…IGVA, LFLT…VMNI, VLVC…IAFM, and LTAL…FGWL.

This sequence belongs to the ABC transporter superfamily. Macrolide exporter (TC 3.A.1.122) family. In terms of assembly, homodimer. Part of the tripartite efflux system MacAB-TolC, which is composed of an inner membrane transporter, MacB, a periplasmic membrane fusion protein, MacA, and an outer membrane component, TolC. The complex forms a large protein conduit and can translocate molecules across both the inner and outer membranes. Interacts with MacA.

Its subcellular location is the cell inner membrane. Functionally, part of the tripartite efflux system MacAB-TolC. MacB is a non-canonical ABC transporter that contains transmembrane domains (TMD), which form a pore in the inner membrane, and an ATP-binding domain (NBD), which is responsible for energy generation. Confers resistance against macrolides. This chain is Macrolide export ATP-binding/permease protein MacB, found in Salmonella choleraesuis (strain SC-B67).